Here is a 526-residue protein sequence, read N- to C-terminus: Keratin, type I cytoskeletal 10 (526 aa).

Low complexity predominate over residues 1 to 15 (MSVRYSSSKQYSSSR). The disordered stretch occupies residues 1 to 29 (MSVRYSSSKQYSSSRSGGGGGGGSSLRIS). Residues 1 to 126 (MSVRYSSSKQ…FGDGGLISGN (126 aa)) form a head region. Residues serine 14, serine 16, serine 34, serine 45, serine 48, and serine 151 each carry the phosphoserine modification. The coil 1A stretch occupies residues 127 to 162 (QKITMQNLNDRLASYLDKVRALEESNYELEVKIKEW). The IF rod domain occupies 127–441 (QKITMQNLND…SLLEGEGSSG (315 aa)). The interval 163–183 (YEKYGNSRQREPRDYSKYYQT) is linker 1. The interval 184–275 (IDDLKNQIFN…KNHEEEMRDL (92 aa)) is coil 1B. The interval 276 to 298 (QNVSTGDVNVEMNAAPGVDLTEL) is linker 12. Residues 299 to 437 (LNNMRSQYEQ…QTYRSLLEGE (139 aa)) form a coil 2 region. A tail region spans residues 438 to 526 (GSSGGGSYGG…GESSSKGPRY (89 aa)). The segment covering 458–505 (GGGGYGGGSSSGGYGGGSSSGGGHGGSSGGSYGGGSSSGGGHGGGSSS) has biased composition (gly residues). Residues 458–526 (GGGGYGGGSS…GESSSKGPRY (69 aa)) form a disordered region. Residues 506–526 (GGHKSTTTGSVGESSSKGPRY) show a composition bias toward low complexity.

This sequence belongs to the intermediate filament family. Heterotetramer of two type I and two type II keratins. Heterodimer with KRT1. Two heterodimers of KRT1 and KRT10 form a heterotetramer. The KRT10 subunit in the heterotetramer is probably disulfide-linked.

Its subcellular location is the secreted. It is found in the extracellular space. The protein localises to the cell surface. It localises to the cytoplasm. In terms of biological role, plays a role in the establishment of the epidermal barrier on plantar skin. Involved in the maintenance of cell layer development and keratin filament bundles in suprabasal cells of the epithelium. This Bos taurus (Bovine) protein is Keratin, type I cytoskeletal 10 (KRT10).